Consider the following 90-residue polypeptide: Probable Fe(2+)-trafficking protein (90 aa).

It belongs to the Fe(2+)-trafficking protein family.

Could be a mediator in iron transactions between iron acquisition and iron-requiring processes, such as synthesis and/or repair of Fe-S clusters in biosynthetic enzymes. This is Probable Fe(2+)-trafficking protein from Pseudomonas fluorescens (strain Pf0-1).